The chain runs to 280 residues: Nitrogenase iron-iron protein alpha chain (280 aa).

3 residues coordinate [8Fe-7S] cluster: cysteine 5, cysteine 31, and cysteine 94. Cysteine 213 provides a ligand contact to [8Fe-9S-C-homocitryl] cluster.

The protein belongs to the NifD/NifK/NifE/NifN family. Hexamer of two alpha, two beta, and two delta chains. Requires [8Fe-7S] cluster as cofactor. [8Fe-9S-C-homocitryl] cluster serves as cofactor.

It catalyses the reaction N2 + 8 reduced [2Fe-2S]-[ferredoxin] + 16 ATP + 16 H2O = H2 + 8 oxidized [2Fe-2S]-[ferredoxin] + 2 NH4(+) + 16 ADP + 16 phosphate + 6 H(+). Its function is as follows. This iron-iron protein is part of the nitrogenase complex that catalyzes the key enzymatic reactions in nitrogen fixation. Other nitrogenase complexes utilize a molybdenum-iron protein or a vanadium-iron protein. The sequence is that of Nitrogenase iron-iron protein alpha chain (anfD) from Heliomicrobium gestii (Heliobacterium gestii).